The primary structure comprises 139 residues: S-adenosylmethionine decarboxylase proenzyme (139 aa).

The active-site Schiff-base intermediate with substrate; via pyruvic acid is the Ser-63. A Pyruvic acid (Ser); by autocatalysis modification is found at Ser-63. The Proton acceptor; for processing activity role is filled by His-68. Cys-83 serves as the catalytic Proton donor; for catalytic activity.

It belongs to the prokaryotic AdoMetDC family. Type 1 subfamily. Heterotetramer of two alpha and two beta chains arranged as a dimer of alpha/beta heterodimers. Pyruvate serves as cofactor. Is synthesized initially as an inactive proenzyme. Formation of the active enzyme involves a self-maturation process in which the active site pyruvoyl group is generated from an internal serine residue via an autocatalytic post-translational modification. Two non-identical subunits are generated from the proenzyme in this reaction, and the pyruvate is formed at the N-terminus of the alpha chain, which is derived from the carboxyl end of the proenzyme. The post-translation cleavage follows an unusual pathway, termed non-hydrolytic serinolysis, in which the side chain hydroxyl group of the serine supplies its oxygen atom to form the C-terminus of the beta chain, while the remainder of the serine residue undergoes an oxidative deamination to produce ammonia and the pyruvoyl group blocking the N-terminus of the alpha chain.

It carries out the reaction S-adenosyl-L-methionine + H(+) = S-adenosyl 3-(methylsulfanyl)propylamine + CO2. Its pathway is amine and polyamine biosynthesis; S-adenosylmethioninamine biosynthesis; S-adenosylmethioninamine from S-adenosyl-L-methionine: step 1/1. Functionally, catalyzes the decarboxylation of S-adenosylmethionine to S-adenosylmethioninamine (dcAdoMet), the propylamine donor required for the synthesis of the polyamines spermine and spermidine from the diamine putrescine. The sequence is that of S-adenosylmethionine decarboxylase proenzyme from Pyrococcus abyssi (strain GE5 / Orsay).